We begin with the raw amino-acid sequence, 372 residues long: Queuine tRNA-ribosyltransferase (372 aa).

Asp92 acts as the Proton acceptor in catalysis. Residues 92–96 (DSGGY), Asp146, Gln188, and Gly215 contribute to the substrate site. Residues 246–252 (GIGSLRE) are RNA binding. The active-site Nucleophile is Asp265. Positions 270 to 274 (TRLGR) are RNA binding; important for wobble base 34 recognition. Residues Cys303, Cys305, Cys308, and His334 each coordinate Zn(2+).

Belongs to the queuine tRNA-ribosyltransferase family. Homodimer. Within each dimer, one monomer is responsible for RNA recognition and catalysis, while the other monomer binds to the replacement base PreQ1. The cofactor is Zn(2+).

It catalyses the reaction 7-aminomethyl-7-carbaguanine + guanosine(34) in tRNA = 7-aminomethyl-7-carbaguanosine(34) in tRNA + guanine. The protein operates within tRNA modification; tRNA-queuosine biosynthesis. Functionally, catalyzes the base-exchange of a guanine (G) residue with the queuine precursor 7-aminomethyl-7-deazaguanine (PreQ1) at position 34 (anticodon wobble position) in tRNAs with GU(N) anticodons (tRNA-Asp, -Asn, -His and -Tyr). Catalysis occurs through a double-displacement mechanism. The nucleophile active site attacks the C1' of nucleotide 34 to detach the guanine base from the RNA, forming a covalent enzyme-RNA intermediate. The proton acceptor active site deprotonates the incoming PreQ1, allowing a nucleophilic attack on the C1' of the ribose to form the product. After dissociation, two additional enzymatic reactions on the tRNA convert PreQ1 to queuine (Q), resulting in the hypermodified nucleoside queuosine (7-(((4,5-cis-dihydroxy-2-cyclopenten-1-yl)amino)methyl)-7-deazaguanosine). The chain is Queuine tRNA-ribosyltransferase from Prochlorococcus marinus (strain MIT 9215).